Here is a 207-residue protein sequence, read N- to C-terminus: Small ribosomal subunit protein uS4A (207 aa).

The S4 RNA-binding domain maps to 98–163 (TRLDNLVYRL…SPKFKELKEN (66 aa)).

This sequence belongs to the universal ribosomal protein uS4 family. Part of the 30S ribosomal subunit. Contacts protein S5. The interaction surface between S4 and S5 is involved in control of translational fidelity.

In terms of biological role, one of the primary rRNA binding proteins, it binds directly to 16S rRNA where it nucleates assembly of the body of the 30S subunit. With S5 and S12 plays an important role in translational accuracy. The protein is Small ribosomal subunit protein uS4A of Alkaliphilus metalliredigens (strain QYMF).